A 767-amino-acid chain; its full sequence is Probable beta-glucosidase K (767 aa).

Residue Asn19 is glycosylated (N-linked (GlcNAc...) asparagine). Residue Asp232 is part of the active site. 3 N-linked (GlcNAc...) asparagine glycosylation sites follow: Asn324, Asn477, and Asn749. The PA14 domain occupies 405 to 552 (EGQPGLRMRF…DPERAIARAV (148 aa)). The tract at residues 727–767 (LGRRGRSGSSPAVYRGRSNNVVNRTSHQGAQRISKGGFAAR) is disordered. A compositionally biased stretch (polar residues) spans 743-757 (RSNNVVNRTSHQGAQ).

Belongs to the glycosyl hydrolase 3 family.

Its subcellular location is the secreted. The enzyme catalyses Hydrolysis of terminal, non-reducing beta-D-glucosyl residues with release of beta-D-glucose.. It participates in glycan metabolism; cellulose degradation. Its function is as follows. Beta-glucosidases are one of a number of cellulolytic enzymes involved in the degradation of cellulosic biomass. Catalyzes the last step releasing glucose from the inhibitory cellobiose. This Aspergillus fumigatus (strain ATCC MYA-4609 / CBS 101355 / FGSC A1100 / Af293) (Neosartorya fumigata) protein is Probable beta-glucosidase K (bglK).